Reading from the N-terminus, the 162-residue chain is Caveolin-2 (162 aa).

Residues 1 to 86 (MGLETEKADV…FEISKYVIYK (86 aa)) are Cytoplasmic-facing. Tyr-19 is modified (phosphotyrosine; by SRC). 2 positions are modified to phosphoserine: Ser-20 and Ser-23. Position 27 is a phosphotyrosine; by SRC (Tyr-27). Ser-36 carries the phosphoserine modification. An intramembrane region (helical) is located at residues 87–107 (FLTVFLAIPLAFTAGILFATL). The Cytoplasmic portion of the chain corresponds to 108 to 162 (SCLHIWIIMPFVKTCLMVLPSVQTIWRSVTDVIIAPLCTSIGRICSSVSLQVSHD).

Belongs to the caveolin family. As to quaternary structure, monomer or homodimer. Interacts with CAV1; the interaction forms a stable heterooligomeric complex that is required for targeting to lipid rafts and for caveolae formation. Tyrosine phosphorylated forms do not form heterooligomers with the Tyr-19-phosphorylated form existing as a monomer or dimer, and the Tyr-27-form as a monomer only. Interacts (tyrosine phosphorylated form) with the SH2 domain-containing proteins, RASA1, NCK1 and SRC. Interacts (tyrosine phosphorylated form) with INSR, the interaction (Tyr-27-phosphorylated form) is increased on insulin stimulation. Interacts (Tyr-19 phosphorylated form) with MAPK1 (phosphorylated form); the interaction, promoted by insulin, leads to nuclear location and MAPK1 activation. Interacts with STAT3; the interaction is increased on insulin-induced tyrosine phosphorylation leading to STAT activation. Post-translationally, phosphorylated on serine and tyrosine residues. CAV1 promotes phosphorylation on Ser-23 which then targets the complex to the plasma membrane, lipid rafts and caveolae. Phosphorylation on Ser-36 appears to modulate mitosis in endothelial cells. Phosphorylation on both Tyr-19 and Tyr-27 is required for insulin-induced 'Ser-727' phosphorylation of STAT3 and its activation. Phosphorylation on Tyr-19 is required for insulin-induced phosphorylation of MAPK1 and DNA binding of STAT3. Tyrosine phosphorylation is induced by both EGF and insulin (By. similarity).

It localises to the nucleus. Its subcellular location is the cytoplasm. It is found in the golgi apparatus membrane. The protein resides in the cell membrane. The protein localises to the membrane. It localises to the caveola. Functionally, may act as a scaffolding protein within caveolar membranes. Interacts directly with G-protein alpha subunits and can functionally regulate their activity. Acts as an accessory protein in conjunction with CAV1 in targeting to lipid rafts and driving caveolae formation. The Ser-36 phosphorylated form has a role in modulating mitosis in endothelial cells. Positive regulator of cellular mitogenesis of the MAPK signaling pathway. Required for the insulin-stimulated nuclear translocation and activation of MAPK1 and STAT3, and the subsequent regulation of cell cycle progression. The polypeptide is Caveolin-2 (CAV2) (Atelerix albiventris (Middle-African hedgehog)).